Reading from the N-terminus, the 264-residue chain is ATP synthase subunit a (264 aa).

7 consecutive transmembrane segments (helical) span residues 41 to 61 (ITNI…INLL), 99 to 119 (IYFP…LIGM), 129 to 149 (HFVL…ILGF), 156 to 176 (FFSL…LVLI), 194 to 214 (ANIL…YNIM), 217 to 237 (GIIF…FSGL), and 238 to 258 (ELGI…GYIK).

The protein belongs to the ATPase A chain family. In terms of assembly, F-type ATPases have 2 components, CF(1) - the catalytic core - and CF(0) - the membrane proton channel. CF(1) has five subunits: alpha(3), beta(3), gamma(1), delta(1), epsilon(1). CF(0) has three main subunits: a, b and c.

It localises to the mitochondrion inner membrane. Its function is as follows. Mitochondrial membrane ATP synthase (F(1)F(0) ATP synthase or Complex V) produces ATP from ADP in the presence of a proton gradient across the membrane which is generated by electron transport complexes of the respiratory chain. F-type ATPases consist of two structural domains, F(1) - containing the extramembraneous catalytic core and F(0) - containing the membrane proton channel, linked together by a central stalk and a peripheral stalk. During catalysis, ATP synthesis in the catalytic domain of F(1) is coupled via a rotary mechanism of the central stalk subunits to proton translocation. Key component of the proton channel; it may play a direct role in the translocation of protons across the membrane. The protein is ATP synthase subunit a (ATP6) of Podospora anserina (strain S / ATCC MYA-4624 / DSM 980 / FGSC 10383) (Pleurage anserina).